Reading from the N-terminus, the 1475-residue chain is ABC transporter G family member 15 (1475 aa).

Residues 1–10 (MDSNENKKNG) show a composition bias toward basic and acidic residues. Disordered stretches follow at residues 1–40 (MDSN…EEHI) and 75–94 (NIKN…GGGA). The span at 17 to 34 (NIINNNNDNNNNNDNNNN) shows a compositional bias: low complexity. Residues 25–67 (NNNNNDNNNNSTEEHIESVEQSIKEFNNVANELETEFRDYLVE) are a coiled coil. One can recognise an ABC transporter 1 domain in the interval 155 to 404 (LNVKNWFKKS…FIDMGFECEP (250 aa)). The ABC transmembrane type-2 1 domain maps to 507–753 (WGDKFSLISR…FTGERYLEKS (247 aa)). 5 helical membrane-spanning segments follow: residues 596–616 (IPII…MFGL), 623–641 (FFIN…NNLY), 653–673 (IGQN…SYII), 680–699 (VWFG…RALM), and 770–790 (ICIV…VLNI). One can recognise an ABC transporter 2 domain in the interval 842–1087 (FTWQHMYYSV…LTSYFQRHGV (246 aa)). 879–886 (GSSGAGKT) provides a ligand contact to ATP. The next 6 membrane-spanning stretches (helical) occupy residues 1180 to 1200 (GYSY…GWTF), 1216 to 1236 (FIFN…PQFI), 1256 to 1276 (FALS…TIFF), 1293 to 1313 (FFFW…GQAI), 1323 to 1343 (ALNL…VLVI), and 1449 to 1469 (FGII…FVFL). In terms of domain architecture, ABC transmembrane type-2 2 spans 1180–1404 (GYSYGTFIQS…TCSDYAFEFL (225 aa)).

The protein belongs to the ABC transporter superfamily. ABCG family. PDR (TC 3.A.1.205) subfamily.

It localises to the membrane. The polypeptide is ABC transporter G family member 15 (abcG15) (Dictyostelium discoideum (Social amoeba)).